Here is a 397-residue protein sequence, read N- to C-terminus: DNA-directed RNA polymerase subunit Rpo1C (397 aa).

It belongs to the RNA polymerase beta' chain family. Part of the RNA polymerase complex.

The protein localises to the cytoplasm. The enzyme catalyses RNA(n) + a ribonucleoside 5'-triphosphate = RNA(n+1) + diphosphate. Functionally, DNA-dependent RNA polymerase (RNAP) catalyzes the transcription of DNA into RNA using the four ribonucleoside triphosphates as substrates. Forms part of the jaw domain. The protein is DNA-directed RNA polymerase subunit Rpo1C of Pyrococcus horikoshii (strain ATCC 700860 / DSM 12428 / JCM 9974 / NBRC 100139 / OT-3).